The primary structure comprises 661 residues: Arginine--tRNA ligase, cytoplasmic (661 aa).

The segment at Met1–Ser72 is could be involved in the assembly of the multisynthetase complex. Residues Ser201–Asn203, His212, Tyr385, Asp389, and Gln413 contribute to the L-arginine site. Positions Pro202–Leu213 match the 'HIGH' region motif. Residues Asn530–Ala544 form an interaction with tRNA region.

This sequence belongs to the class-I aminoacyl-tRNA synthetase family. In terms of assembly, monomer; also part of a multisubunit complex that groups tRNA ligases for Arg, Asp, Glu, Gln, Ile, Leu, Lys, Met and Pro.

It localises to the cytoplasm. Its subcellular location is the cytosol. It carries out the reaction tRNA(Arg) + L-arginine + ATP = L-arginyl-tRNA(Arg) + AMP + diphosphate. Forms part of a macromolecular complex that catalyzes the attachment of specific amino acids to cognate tRNAs during protein synthesis. This is Arginine--tRNA ligase, cytoplasmic (RARS1) from Gallus gallus (Chicken).